The chain runs to 589 residues: Ectoderm-neural cortex protein 1 (589 aa).

The BTB domain occupies Thr-46 to Glu-114. 6 Kelch repeats span residues Ala-296 to Cys-340, Lys-341 to His-388, Cys-389 to Leu-444, Leu-446 to Asn-492, Ile-494 to Asn-538, and Lys-539 to Lys-585.

Binds to RB1. Hypophosphorylated RB1 associates with ENC1 during neuronal differentiation, while hyperphosphorylated RB1 associates with ENC1 in undifferentiating cells. Part of a complex that contains CUL3, RBX1 and ENC1. Interacts indirectly with KEAP1. Ubiquitinated by E3 ubiquitin ligase complex formed by CUL3 and RBX1 and probably targeted for proteasome-independent degradation. Quinone-induced oxidative stress increases its ubiquitination. As to expression, detected in fetal brain tissue, moderate expression in fetal heart, lung and kidney. Highly expressed in adult brain, particularly high in the hippocampus and amygdala, and spinal cord. Detectable in adult pancreas. May be down-regulated in neuroblastoma tumors.

It localises to the nucleus matrix. It is found in the cytoplasm. Its subcellular location is the cytoskeleton. Actin-binding protein involved in the regulation of neuronal process formation and in differentiation of neural crest cells. Down-regulates transcription factor NF2L2/NRF2 by decreasing the rate of protein synthesis and not via a ubiquitin-mediated proteasomal degradation mechanism. This chain is Ectoderm-neural cortex protein 1 (ENC1), found in Homo sapiens (Human).